A 239-amino-acid chain; its full sequence is 7-cyano-7-deazaguanine synthase (239 aa).

Position 13 to 23 (13 to 23) interacts with ATP; the sequence is FSGGQDSTTCL. Zn(2+)-binding residues include Cys192, Cys201, Cys204, and Cys207.

This sequence belongs to the QueC family. Zn(2+) is required as a cofactor.

The enzyme catalyses 7-carboxy-7-deazaguanine + NH4(+) + ATP = 7-cyano-7-deazaguanine + ADP + phosphate + H2O + H(+). The protein operates within purine metabolism; 7-cyano-7-deazaguanine biosynthesis. Catalyzes the ATP-dependent conversion of 7-carboxy-7-deazaguanine (CDG) to 7-cyano-7-deazaguanine (preQ(0)). This chain is 7-cyano-7-deazaguanine synthase, found in Shewanella sp. (strain MR-7).